The primary structure comprises 339 residues: DnaJ homolog subfamily C member 22 (339 aa).

Positions 4–50 (GLLMTYVLWALGGPVGLHHLYLGRDSHALLWMLTLGGGGLGWLWEFW) constitute a TM2 domain. Transmembrane regions (helical) follow at residues 5-25 (LLMT…HLYL), 30-50 (HALL…WEFW), 81-101 (FASQ…SLSS), 105-125 (FYIV…AAVG), 135-155 (LGAA…ILPI), 185-205 (VGLA…YNTA), and 218-238 (FLSW…VLLL). The J domain maps to 277–339 (LAHQVLGVPE…LSQPKKPRAS (63 aa)).

It localises to the membrane. Functionally, may function as a co-chaperone. In Mus musculus (Mouse), this protein is DnaJ homolog subfamily C member 22 (Dnajc22).